Reading from the N-terminus, the 150-residue chain is Testis-expressed protein 22 (150 aa).

Residues 1–23 (MDSRKLSPRGKKLESHLSQEHRR) are compositionally biased toward basic and acidic residues. The disordered stretch occupies residues 1 to 26 (MDSRKLSPRGKKLESHLSQEHRRPPL).

It is found in the cytoplasm. The protein resides in the cytoplasmic vesicle. Its subcellular location is the secretory vesicle. It localises to the acrosome. This Homo sapiens (Human) protein is Testis-expressed protein 22 (TEX22).